We begin with the raw amino-acid sequence, 719 residues long: DNA polymerase epsilon subunit B (719 aa).

The interval 107–147 is disordered; it reads SIPPKTKTYNNGGGKTTTIDRFLTKRPSPSDNDEGPLDQSI.

It belongs to the DNA polymerase epsilon subunit B family. In terms of assembly, heterotetramer. Consists of four subunits: POL2, DPB2, DPB3 and DPB4.

The protein resides in the nucleus. In terms of biological role, as accessory component of the DNA polymerase epsilon (DNA polymerase II) participates in chromosomal DNA replication. The sequence is that of DNA polymerase epsilon subunit B (DPB2) from Candida glabrata (strain ATCC 2001 / BCRC 20586 / JCM 3761 / NBRC 0622 / NRRL Y-65 / CBS 138) (Yeast).